The primary structure comprises 315 residues: Cytochrome c biogenesis protein CcsA (315 aa).

The next 7 membrane-spanning stretches (helical) occupy residues 17-37 (LGFA…WAVA), 72-92 (ISNL…AQLF), 101-121 (IVSA…SFVL), 146-166 (VIMC…GVFL), 221-241 (SITA…VWAN), 255-272 (TWAL…HTRI), and 282-302 (AILA…VNLL).

This sequence belongs to the CcmF/CycK/Ccl1/NrfE/CcsA family. May interact with ccs1.

The protein localises to the cellular thylakoid membrane. In terms of biological role, required during biogenesis of c-type cytochromes (cytochrome c6 and cytochrome f) at the step of heme attachment. The protein is Cytochrome c biogenesis protein CcsA of Prochlorococcus marinus (strain NATL2A).